A 140-amino-acid chain; its full sequence is Nucleoside diphosphate kinase (140 aa).

Residues Lys11, Phe59, Arg87, Thr93, Arg104, and Asn114 each coordinate ATP. The active-site Pros-phosphohistidine intermediate is the His117.

Belongs to the NDK family. In terms of assembly, homotetramer. It depends on Mg(2+) as a cofactor.

The protein resides in the cytoplasm. It catalyses the reaction a 2'-deoxyribonucleoside 5'-diphosphate + ATP = a 2'-deoxyribonucleoside 5'-triphosphate + ADP. It carries out the reaction a ribonucleoside 5'-diphosphate + ATP = a ribonucleoside 5'-triphosphate + ADP. Its function is as follows. Major role in the synthesis of nucleoside triphosphates other than ATP. The ATP gamma phosphate is transferred to the NDP beta phosphate via a ping-pong mechanism, using a phosphorylated active-site intermediate. The sequence is that of Nucleoside diphosphate kinase from Methylobacterium nodulans (strain LMG 21967 / CNCM I-2342 / ORS 2060).